A 329-amino-acid polypeptide reads, in one-letter code: Putative helicase 109L (329 aa).

Residues 105 to 259 enclose the Helicase ATP-binding domain; it reads LTLLTQHKSC…LFDMFFGPEM (155 aa). 118–125 contacts ATP; it reads CYTGFGKT. The DEAH box motif lies at 212 to 215; sequence DEAH.

This sequence belongs to the DEAD box helicase family. DEAH subfamily.

The protein is Putative helicase 109L of Invertebrate iridescent virus 3 (IIV-3).